The chain runs to 529 residues: Phenylalanine N-monooxygenase (529 aa).

The helical transmembrane segment at 1 to 21 (MLDSTPMLAFIIGLLLLALTM) threads the bilayer. Cysteine 467 is a binding site for heme.

The protein belongs to the cytochrome P450 family. Heme is required as a cofactor.

It is found in the endoplasmic reticulum membrane. It catalyses the reaction L-phenylalanine + 2 reduced [NADPH--hemoprotein reductase] + 2 O2 = (E)-phenylacetaldehyde oxime + 2 oxidized [NADPH--hemoprotein reductase] + CO2 + 3 H2O + 2 H(+). The protein operates within secondary metabolite biosynthesis; phenylglucosinolate biosynthesis. Converts L-phenylalanine into phenylacetaldoxime, the precursor of benzylglucosinolate (glucotropeolin). This chain is Phenylalanine N-monooxygenase (CYP79A2), found in Arabidopsis thaliana (Mouse-ear cress).